A 790-amino-acid chain; its full sequence is Endonuclease MutS2 (790 aa).

334–341 (GPNTGGKT) provides a ligand contact to ATP. The 76-residue stretch at 713-788 (LDVRGMTLDD…GDGVTIVELH (76 aa)) folds into the Smr domain.

It belongs to the DNA mismatch repair MutS family. MutS2 subfamily. In terms of assembly, homodimer. Binds to stalled ribosomes, contacting rRNA.

Functionally, endonuclease that is involved in the suppression of homologous recombination and thus may have a key role in the control of bacterial genetic diversity. Its function is as follows. Acts as a ribosome collision sensor, splitting the ribosome into its 2 subunits. Detects stalled/collided 70S ribosomes which it binds and splits by an ATP-hydrolysis driven conformational change. Acts upstream of the ribosome quality control system (RQC), a ribosome-associated complex that mediates the extraction of incompletely synthesized nascent chains from stalled ribosomes and their subsequent degradation. Probably generates substrates for RQC. This is Endonuclease MutS2 from Caldanaerobacter subterraneus subsp. tengcongensis (strain DSM 15242 / JCM 11007 / NBRC 100824 / MB4) (Thermoanaerobacter tengcongensis).